Consider the following 563-residue polypeptide: DEAD-box ATP-dependent RNA helicase 25 (563 aa).

The disordered stretch occupies residues 21 to 57; that stretch reads KKLTSDEDGSGKLVKDNNKSLKRGREGKSDVDEPLIK. Over residues 23–56 the composition is skewed to basic and acidic residues; the sequence is LTSDEDGSGKLVKDNNKSLKRGREGKSDVDEPLI. S25 is modified (phosphoserine). A Q motif motif is present at residues 80 to 108; the sequence is TRFDQFPLSPLTLKGIEDAGFKTMTVVQE. The 184-residue stretch at 111-294 folds into the Helicase ATP-binding domain; sequence LPLILQGKDI…HVALKRDHEF (184 aa). Position 124–131 (124–131) interacts with ATP; sequence AKTGTGKT. The DEAD box motif lies at 242-245; that stretch reads DEAD. The Helicase C-terminal domain occupies 328 to 479; the sequence is LLKKHITDNV…AVKKVQKGLI (152 aa).

The protein belongs to the DEAD box helicase family.

The catalysed reaction is ATP + H2O = ADP + phosphate + H(+). This Arabidopsis thaliana (Mouse-ear cress) protein is DEAD-box ATP-dependent RNA helicase 25 (RH25).